The primary structure comprises 233 residues: Ribosome maturation factor RimM (233 aa).

Residues 1 to 51 form a disordered region; sequence MKRKQDSKGAGSRGQGAGEKKQGAGGRGQGEKKQKKSPVPSPQSPVPDPDE. A compositionally biased stretch (gly residues) spans 11-28; the sequence is GSRGQGAGEKKQGAGGRG. The region spanning 145–226 is the PRC barrel domain; the sequence is GEDEYHVVDL…RIEITPPPGL (82 aa).

The protein belongs to the RimM family. As to quaternary structure, binds ribosomal protein uS19.

The protein localises to the cytoplasm. Its function is as follows. An accessory protein needed during the final step in the assembly of 30S ribosomal subunit, possibly for assembly of the head region. Essential for efficient processing of 16S rRNA. May be needed both before and after RbfA during the maturation of 16S rRNA. It has affinity for free ribosomal 30S subunits but not for 70S ribosomes. The protein is Ribosome maturation factor RimM of Trichormus variabilis (strain ATCC 29413 / PCC 7937) (Anabaena variabilis).